Here is a 163-residue protein sequence, read N- to C-terminus: Large ribosomal subunit protein uL15 (163 aa).

This sequence belongs to the universal ribosomal protein uL15 family. Part of the 50S ribosomal subunit.

In terms of biological role, binds to the 23S rRNA. In Orientia tsutsugamushi (strain Ikeda) (Rickettsia tsutsugamushi), this protein is Large ribosomal subunit protein uL15.